The chain runs to 142 residues: MAKKITRVAKLEFMAMQAKPGAELASLGINMPAFTREFNDATKDRAGDVVPVVITAYDDKSFDFVLKTTPTAYMLKKVAKIEKGASNSRTQTVATVTLDDIRSIAEYKMPDLNANTIEAAMKQVIGTAKNMGIKVTGMEDFK.

The protein belongs to the universal ribosomal protein uL11 family. In terms of assembly, part of the ribosomal stalk of the 50S ribosomal subunit. Interacts with L10 and the large rRNA to form the base of the stalk. L10 forms an elongated spine to which L12 dimers bind in a sequential fashion forming a multimeric L10(L12)X complex. In terms of processing, one or more lysine residues are methylated.

Its function is as follows. Forms part of the ribosomal stalk which helps the ribosome interact with GTP-bound translation factors. The chain is Large ribosomal subunit protein uL11 from Mycoplasma mycoides subsp. mycoides SC (strain CCUG 32753 / NCTC 10114 / PG1).